A 287-amino-acid polypeptide reads, in one-letter code: Urease accessory protein UreD (287 aa).

Belongs to the UreD family. UreD, UreF and UreG form a complex that acts as a GTP-hydrolysis-dependent molecular chaperone, activating the urease apoprotein by helping to assemble the nickel containing metallocenter of UreC. The UreE protein probably delivers the nickel.

It localises to the cytoplasm. Its function is as follows. Required for maturation of urease via the functional incorporation of the urease nickel metallocenter. In Aliivibrio fischeri (strain ATCC 700601 / ES114) (Vibrio fischeri), this protein is Urease accessory protein UreD.